A 191-amino-acid chain; its full sequence is uncharacterized protein (191 aa).

Transmembrane regions (helical) follow at residues 24–44 (IVRG…GASG), 51–71 (IIAA…LGAF), 114–134 (LIDG…FFLF), 139–159 (ALYV…VFIG), and 167–187 (IISG…CFMI).

Its subcellular location is the cell membrane. This is an uncharacterized protein from Methanocaldococcus jannaschii (strain ATCC 43067 / DSM 2661 / JAL-1 / JCM 10045 / NBRC 100440) (Methanococcus jannaschii).